The following is a 513-amino-acid chain: ATP synthase subunit alpha (513 aa).

169–176 (GDRQTGKT) is a binding site for ATP.

Belongs to the ATPase alpha/beta chains family. In terms of assembly, F-type ATPases have 2 components, CF(1) - the catalytic core - and CF(0) - the membrane proton channel. CF(1) has five subunits: alpha(3), beta(3), gamma(1), delta(1), epsilon(1). CF(0) has three main subunits: a(1), b(2) and c(9-12). The alpha and beta chains form an alternating ring which encloses part of the gamma chain. CF(1) is attached to CF(0) by a central stalk formed by the gamma and epsilon chains, while a peripheral stalk is formed by the delta and b chains.

The protein resides in the cell inner membrane. It carries out the reaction ATP + H2O + 4 H(+)(in) = ADP + phosphate + 5 H(+)(out). Functionally, produces ATP from ADP in the presence of a proton gradient across the membrane. The alpha chain is a regulatory subunit. The sequence is that of ATP synthase subunit alpha from Cupriavidus pinatubonensis (strain JMP 134 / LMG 1197) (Cupriavidus necator (strain JMP 134)).